The chain runs to 221 residues: Transmembrane emp24 domain-containing protein 3 (221 aa).

An N-terminal signal peptide occupies residues 1–25; the sequence is MVHEAPHASSFQMLLQLLLLLLLRA. Residues 28–184 lie on the Lumenal side of the membrane; it reads LRSAELTFEL…RAEDLNSRVS (157 aa). The region spanning 42-124 is the GOLD domain; sequence KQCFHEEVEQ…HKTVYFDFQV (83 aa). R103 is modified (dimethylated arginine). Residues 185–205 form a helical membrane-spanning segment; the sequence is YWSVGETIALFVVSFSQVLLL. Over 206–221 the chain is Cytoplasmic; that stretch reads KSFFTEKRPVNRAVHS. Positions 208 to 209 match the COPII vesicle coat-binding motif; that stretch reads FF. Positions 208 to 221 match the COPI vesicle coat-binding motif; that stretch reads FFTEKRPVNRAVHS.

Belongs to the EMP24/GP25L family. Monomer in endoplasmic reticulum, endoplasmic reticulum-Golgi intermediate compartment and cis-Golgi network. Interacts (via C-terminus) with COPG1; the interaction involves dimeric TMED3; however, there are conflicting reports on the interaction. Interacts with GORASP1 and GORASP2.

It is found in the endoplasmic reticulum-Golgi intermediate compartment membrane. It localises to the golgi apparatus. The protein resides in the cis-Golgi network membrane. The protein localises to the golgi stack membrane. Its subcellular location is the endoplasmic reticulum membrane. It is found in the cytoplasmic vesicle. It localises to the COPI-coated vesicle membrane. Functionally, potential role in vesicular protein trafficking, mainly in the early secretory pathway. Contributes to the coupled localization of TMED2 and TMED10 in the cis-Golgi network. The polypeptide is Transmembrane emp24 domain-containing protein 3 (Tmed3) (Mus musculus (Mouse)).